A 921-amino-acid chain; its full sequence is Protein translocase subunit SecA (921 aa).

Residues Gln-87, Gly-105 to Thr-109, and Asp-516 each bind ATP. Cys-905, Cys-907, Cys-916, and His-917 together coordinate Zn(2+).

It belongs to the SecA family. Monomer and homodimer. Part of the essential Sec protein translocation apparatus which comprises SecA, SecYEG and auxiliary proteins SecDF-YajC and YidC. The cofactor is Zn(2+).

Its subcellular location is the cell inner membrane. It localises to the cytoplasm. The catalysed reaction is ATP + H2O + cellular proteinSide 1 = ADP + phosphate + cellular proteinSide 2.. In terms of biological role, part of the Sec protein translocase complex. Interacts with the SecYEG preprotein conducting channel. Has a central role in coupling the hydrolysis of ATP to the transfer of proteins into and across the cell membrane, serving both as a receptor for the preprotein-SecB complex and as an ATP-driven molecular motor driving the stepwise translocation of polypeptide chains across the membrane. This Polaromonas sp. (strain JS666 / ATCC BAA-500) protein is Protein translocase subunit SecA.